We begin with the raw amino-acid sequence, 868 residues long: DNA topoisomerase 1 (868 aa).

The 146-residue stretch at 3-148 (KSLVIVESPA…RFSRVVFNEI (146 aa)) folds into the Toprim domain. 2 residues coordinate Mg(2+): glutamate 9 and aspartate 117. Residues 164–581 (NLDRVNAQQT…QFFKDFSQQL (418 aa)) form the Topo IA-type catalytic domain. Positions 198–203 (SAGRVQ) are interaction with DNA. Tyrosine 325 serves as the catalytic O-(5'-phospho-DNA)-tyrosine intermediate. C4-type zinc fingers lie at residues 605–636 (CPTCGRKMAIRTASTGVFLGCSGYALPPKERC), 667–694 (CPKCGTAMDSYLIDPERKIHICGHNPNC), and 716–739 (CDKCGADMHLKLGRFGKYMGCTSC).

This sequence belongs to the type IA topoisomerase family. In terms of assembly, monomer. Mg(2+) is required as a cofactor.

The catalysed reaction is ATP-independent breakage of single-stranded DNA, followed by passage and rejoining.. In terms of biological role, releases the supercoiling and torsional tension of DNA, which is introduced during the DNA replication and transcription, by transiently cleaving and rejoining one strand of the DNA duplex. Introduces a single-strand break via transesterification at a target site in duplex DNA. The scissile phosphodiester is attacked by the catalytic tyrosine of the enzyme, resulting in the formation of a DNA-(5'-phosphotyrosyl)-enzyme intermediate and the expulsion of a 3'-OH DNA strand. The free DNA strand then undergoes passage around the unbroken strand, thus removing DNA supercoils. Finally, in the religation step, the DNA 3'-OH attacks the covalent intermediate to expel the active-site tyrosine and restore the DNA phosphodiester backbone. The chain is DNA topoisomerase 1 from Pasteurella multocida (strain Pm70).